A 463-amino-acid chain; its full sequence is 23S rRNA (uracil(1939)-C(5))-methyltransferase RlmD (463 aa).

One can recognise a TRAM domain in the interval 6–76 (KSRKPQQPEY…KRLEEAEMVA (71 aa)). [4Fe-4S] cluster-binding residues include Cys90, Cys96, Cys99, and Cys178. 6 residues coordinate S-adenosyl-L-methionine: Gln288, Phe317, Asn322, Glu341, Asp368, and Asp389. Cys415 serves as the catalytic Nucleophile.

It belongs to the class I-like SAM-binding methyltransferase superfamily. RNA M5U methyltransferase family. RlmD subfamily.

It catalyses the reaction uridine(1939) in 23S rRNA + S-adenosyl-L-methionine = 5-methyluridine(1939) in 23S rRNA + S-adenosyl-L-homocysteine + H(+). Catalyzes the formation of 5-methyl-uridine at position 1939 (m5U1939) in 23S rRNA. In Acinetobacter baumannii (strain SDF), this protein is 23S rRNA (uracil(1939)-C(5))-methyltransferase RlmD.